The following is a 547-amino-acid chain: (E)-beta-caryophyllene synthase (547 aa).

Mg(2+) contacts are provided by aspartate 302 and aspartate 306. Substrate contacts are provided by aspartate 302, aspartate 306, arginine 443, and asparagine 446. The short motif at 302-306 (DDLYD) is the DDXXD motif element. Residues asparagine 446 and glutamate 454 each contribute to the Mg(2+) site.

The protein belongs to the terpene synthase family. In terms of assembly, monomer. Mg(2+) serves as cofactor. The cofactor is Mn(2+).

Its subcellular location is the cytoplasm. It catalyses the reaction (2E,6E)-farnesyl diphosphate = (-)-(E)-beta-caryophyllene + diphosphate. It participates in secondary metabolite biosynthesis; terpenoid biosynthesis. In terms of biological role, component of the volatile terpenes biosynthesis pathways. Sesquiterpene synthase that converts farnesyl diphosphate to (E)-beta-caryophyllene. Involved in indirect defense by producing volatile signals attracting natural enemies of herbivores. In Zea mays (Maize), this protein is (E)-beta-caryophyllene synthase.